A 385-amino-acid chain; its full sequence is Tetraacyldisaccharide 4'-kinase (385 aa).

Residue 60–67 (TVGGSGKT) participates in ATP binding.

It belongs to the LpxK family.

The catalysed reaction is a lipid A disaccharide + ATP = a lipid IVA + ADP + H(+). Its pathway is glycolipid biosynthesis; lipid IV(A) biosynthesis; lipid IV(A) from (3R)-3-hydroxytetradecanoyl-[acyl-carrier-protein] and UDP-N-acetyl-alpha-D-glucosamine: step 6/6. Its function is as follows. Transfers the gamma-phosphate of ATP to the 4'-position of a tetraacyldisaccharide 1-phosphate intermediate (termed DS-1-P) to form tetraacyldisaccharide 1,4'-bis-phosphate (lipid IVA). The protein is Tetraacyldisaccharide 4'-kinase of Psychrobacter arcticus (strain DSM 17307 / VKM B-2377 / 273-4).